We begin with the raw amino-acid sequence, 87 residues long: MVLMGEKVRDREHHERLFKASMSPIRRQIVAAIGVQGKTREELKKELELSDFQFKFNLDWLIREGFVKEEDGKLKLTDDGIELLEAG.

It to A.fulgidus AF_1348 and AF_1363.

This is an uncharacterized protein from Archaeoglobus fulgidus (strain ATCC 49558 / DSM 4304 / JCM 9628 / NBRC 100126 / VC-16).